A 157-amino-acid chain; its full sequence is 6,7-dimethyl-8-ribityllumazine synthase 1 (157 aa).

Residues Phe-22, 53 to 55 (ALE), and 82 to 84 (TVI) each bind 5-amino-6-(D-ribitylamino)uracil. (2S)-2-hydroxy-3-oxobutyl phosphate is bound at residue 87 to 88 (ET). The active-site Proton donor is the His-90. Asn-115 lines the 5-amino-6-(D-ribitylamino)uracil pocket. (2S)-2-hydroxy-3-oxobutyl phosphate is bound at residue His-129.

The protein belongs to the DMRL synthase family. In terms of assembly, homopentamer.

It catalyses the reaction (2S)-2-hydroxy-3-oxobutyl phosphate + 5-amino-6-(D-ribitylamino)uracil = 6,7-dimethyl-8-(1-D-ribityl)lumazine + phosphate + 2 H2O + H(+). The protein operates within cofactor biosynthesis; riboflavin biosynthesis; riboflavin from 2-hydroxy-3-oxobutyl phosphate and 5-amino-6-(D-ribitylamino)uracil: step 1/2. Functionally, catalyzes the formation of 6,7-dimethyl-8-ribityllumazine by condensation of 5-amino-6-(D-ribitylamino)uracil with 3,4-dihydroxy-2-butanone 4-phosphate. This is the penultimate step in the biosynthesis of riboflavin. The polypeptide is 6,7-dimethyl-8-ribityllumazine synthase 1 (ribH1) (Brucella abortus (strain 2308)).